The primary structure comprises 306 residues: MIKQRTLKRIVQATGVGLHTGKKVTLTMRPAPANTGVIYRRTDLNPPVDFPADAKSVRDTMLCTCLVNEHDVRISTVEHLNAALAGLGIDNIIIEVNAPEVPIMDGSASPFVYLLLDAGIEELNSAKKFLRLKETVRVEDGDKWAELSPFNGFRLDFTIDFNHPAIDSSTQRYCLDFSADSFVRQISRARTFGFMRDIEYLQSRGLCLGGSFDCAIVVDDYRVLNEDGLRFEDEFVRHKMLDAIGDLFMCGHNIIGAFTAYKSGHALNNKLLQAVLAKQEAWEFVTFQDEAEMPLAFKAPSTVLAY.

Zn(2+) contacts are provided by H79, H238, and D242. Residue H265 is the Proton donor of the active site.

Belongs to the LpxC family. It depends on Zn(2+) as a cofactor.

It carries out the reaction a UDP-3-O-[(3R)-3-hydroxyacyl]-N-acetyl-alpha-D-glucosamine + H2O = a UDP-3-O-[(3R)-3-hydroxyacyl]-alpha-D-glucosamine + acetate. The protein operates within glycolipid biosynthesis; lipid IV(A) biosynthesis; lipid IV(A) from (3R)-3-hydroxytetradecanoyl-[acyl-carrier-protein] and UDP-N-acetyl-alpha-D-glucosamine: step 2/6. Functionally, catalyzes the hydrolysis of UDP-3-O-myristoyl-N-acetylglucosamine to form UDP-3-O-myristoylglucosamine and acetate, the committed step in lipid A biosynthesis. This chain is UDP-3-O-acyl-N-acetylglucosamine deacetylase, found in Yersinia pseudotuberculosis serotype O:1b (strain IP 31758).